A 424-amino-acid polypeptide reads, in one-letter code: Putative chloroquine resistance transporter (424 aa).

Topologically, residues 1–56 (MTGMKKGKNKKKNVKNDERYKELDSLISNDSEIGNNSRWGGAKRICKLIGNEMRNN) are cytoplasmic. The helical transmembrane segment at 57–77 (IYVYLLSILYLCVSVMNKVFS) threads the bilayer. Over 78–88 (KRTLNKIGNYS) the chain is Vacuolar. N-linked (GlcNAc...) asparagine glycosylation occurs at Asn86. Residues 89–109 (FVTSEVHNMICTIVFQLLYFI) form a helical membrane-spanning segment. Residues 110–125 (YRKTSNPASRNESQKN) lie on the Cytoplasmic side of the membrane. The chain crosses the membrane as a helical span at residues 126 to 146 (FGWQFFLISLLDASTVIITMI). At 147 to 156 (GLTRTTGNIQ) the chain is on the vacuolar side. Residues 157–177 (SFIMQLIIPVNMYFCFIFLGY) form a helical membrane-spanning segment. At 178–180 (RYH) the chain is on the cytoplasmic side. A helical transmembrane segment spans residues 181–201 (LFNYLGAFIILITIAAVETVL). Residues 202 to 209 (SYETQSDN) lie on the Vacuolar side of the membrane. A helical membrane pass occupies residues 210 to 230 (SIIFNLIMIFALIPLSFSNMT). Over 231 to 248 (REVVFKKHKINIIRLNAM) the chain is Cytoplasmic. A helical membrane pass occupies residues 249-269 (VALFQFFTSLLVLPVYNISFL). Over 270–317 (KEIYMPFSEMGTNINDGLRCLFYGQSTIVENCGVGMVKMCDQCEGAWK) the chain is Vacuolar. Disulfide bonds link Cys289–Cys312 and Cys301–Cys309. Residues 318–338 (TFITYSFFNICDNLLVCYIID) traverse the membrane as a helical segment. The Cytoplasmic segment spans residues 339–346 (KFSTMTYT). Residues 347 to 367 (IVSCIQGPAITIAYYFKFLAG) traverse the membrane as a helical segment. Residues 368–377 (DVVRQPRLLD) are Vacuolar-facing. Residues 378–398 (FLTLFGYLLGTIIYRIGNIIL) form a helical membrane-spanning segment. Topologically, residues 399–424 (EKKKMLKALNTDGSEAELTSIETSTA) are cytoplasmic.

It belongs to the CRT-like transporter family.

It localises to the vacuole membrane. Its function is as follows. Nutrient transporter. Involved in maintaining the osmotic homeostasis of the digestive vacuole. This Plasmodium chabaudi protein is Putative chloroquine resistance transporter.